The primary structure comprises 611 residues: Poly(3-hydroxyalkanoate) polymerase subunit PhaC (611 aa).

Cys349 is an active-site residue.

The protein belongs to the PHA/PHB synthase family. Type I PhaC subfamily. As to quaternary structure, monomer.

Its subcellular location is the cytoplasm. The enzyme catalyses (3R)-3-hydroxybutanoyl-CoA + [(3R)-hydroxybutanoate](n) = [(3R)-hydroxybutanoate](n+1) + CoA. It participates in biopolymer metabolism; poly-(R)-3-hydroxybutanoate biosynthesis. In terms of biological role, polymerizes D(-)-3-hydroxybutyryl-CoA to create PHB which consists of thousands of hydroxybutyrate molecules linked end to end. PHB serves as an intracellular energy reserve material when cells grow under conditions of nutrient limitation. This Rhizobium meliloti (strain 1021) (Ensifer meliloti) protein is Poly(3-hydroxyalkanoate) polymerase subunit PhaC.